The following is a 30-amino-acid chain: Cycloviolacin-O1 (30 aa).

Residues 1 to 30 (GIPCAESCVYIPCTVTALLGCSCSNRVCYN) constitute a cross-link (cyclopeptide (Gly-Asn)). Intrachain disulfides connect cysteine 4/cysteine 21, cysteine 8/cysteine 23, and cysteine 13/cysteine 28.

Post-translationally, this is a cyclic peptide. Expressed in leaves, petals, petioles and roots but not in runners (at protein level).

Its function is as follows. Probably participates in a plant defense mechanism. In Viola odorata (Sweet violet), this protein is Cycloviolacin-O1.